The sequence spans 202 residues: HTH-type transcriptional regulator BetI (202 aa).

The region spanning 8 to 68 (PIRRRQLIDA…ATMRDITRQL (61 aa)) is the HTH tetR-type domain. The H-T-H motif DNA-binding region spans 31-50 (TIAQIARRAGVSAGIISHYF).

It functions in the pathway amine and polyamine biosynthesis; betaine biosynthesis via choline pathway [regulation]. Functionally, repressor involved in the biosynthesis of the osmoprotectant glycine betaine. It represses transcription of the choline transporter BetT and the genes of BetAB involved in the synthesis of glycine betaine. The protein is HTH-type transcriptional regulator BetI of Cronobacter sakazakii (strain ATCC BAA-894) (Enterobacter sakazakii).